Here is a 304-residue protein sequence, read N- to C-terminus: tRNA dimethylallyltransferase (304 aa).

Residue 8–15 (GPTASGKS) participates in ATP binding. 10 to 15 (TASGKS) is a substrate binding site. An interaction with substrate tRNA region spans residues 33-36 (DSRQ).

The protein belongs to the IPP transferase family. As to quaternary structure, monomer. The cofactor is Mg(2+).

The catalysed reaction is adenosine(37) in tRNA + dimethylallyl diphosphate = N(6)-dimethylallyladenosine(37) in tRNA + diphosphate. In terms of biological role, catalyzes the transfer of a dimethylallyl group onto the adenine at position 37 in tRNAs that read codons beginning with uridine, leading to the formation of N6-(dimethylallyl)adenosine (i(6)A). This chain is tRNA dimethylallyltransferase, found in Chlorobium luteolum (strain DSM 273 / BCRC 81028 / 2530) (Pelodictyon luteolum).